A 455-amino-acid polypeptide reads, in one-letter code: Chromosomal replication initiator protein DnaA (455 aa).

The tract at residues 1-74 (MFNFEKFWQH…IQSAYGYAGV (74 aa)) is domain I, interacts with DnaA modulators. The interval 74 to 117 (VELLPVFQISEDSDTPERIVTPEPQHNLQTTPTRAPQREFAKDL) is domain II. Positions 118–334 (KLNEKYTFDN…GALVKVQAYA (217 aa)) are domain III, AAA+ region. Positions 162, 164, 165, and 166 each coordinate ATP. Residues 335–455 (TIEKADIDIN…VFDLKQMLEH (121 aa)) are domain IV, binds dsDNA.

The protein belongs to the DnaA family. In terms of assembly, oligomerizes as a right-handed, spiral filament on DNA at oriC.

It is found in the cytoplasm. Functionally, plays an essential role in the initiation and regulation of chromosomal replication. ATP-DnaA binds to the origin of replication (oriC) to initiate formation of the DNA replication initiation complex once per cell cycle. Binds the DnaA box (a 9 base pair repeat at the origin) and separates the double-stranded (ds)DNA. Forms a right-handed helical filament on oriC DNA; dsDNA binds to the exterior of the filament while single-stranded (ss)DNA is stabiized in the filament's interior. The ATP-DnaA-oriC complex binds and stabilizes one strand of the AT-rich DNA unwinding element (DUE), permitting loading of DNA polymerase. After initiation quickly degrades to an ADP-DnaA complex that is not apt for DNA replication. Binds acidic phospholipids. In Lactobacillus acidophilus (strain ATCC 700396 / NCK56 / N2 / NCFM), this protein is Chromosomal replication initiator protein DnaA.